A 147-amino-acid polypeptide reads, in one-letter code: Hemoglobin subunit delta (147 aa).

The Globin domain maps to N3–H147. 2 residues coordinate heme b: H64 and H93.

It belongs to the globin family. In terms of assembly, heterotetramer of two delta chains and two alpha chains. Red blood cells.

The protein is Hemoglobin subunit delta (HBD) of Elephas maximus (Indian elephant).